Consider the following 219-residue polypeptide: Peptide methionine sulfoxide reductase MsrA (219 aa).

The segment at 1-20 (MGLFRSPRQNLPTAADALPG) is disordered. Residue cysteine 55 is part of the active site.

The protein belongs to the MsrA Met sulfoxide reductase family.

It carries out the reaction L-methionyl-[protein] + [thioredoxin]-disulfide + H2O = L-methionyl-(S)-S-oxide-[protein] + [thioredoxin]-dithiol. The catalysed reaction is [thioredoxin]-disulfide + L-methionine + H2O = L-methionine (S)-S-oxide + [thioredoxin]-dithiol. Its function is as follows. Has an important function as a repair enzyme for proteins that have been inactivated by oxidation. Catalyzes the reversible oxidation-reduction of methionine sulfoxide in proteins to methionine. In Rhodospirillum centenum (strain ATCC 51521 / SW), this protein is Peptide methionine sulfoxide reductase MsrA.